A 542-amino-acid polypeptide reads, in one-letter code: Serine/threonine-protein phosphatase 2A regulatory subunit pptr-1 (542 aa).

Disordered regions lie at residues 1-28 and 500-542; these read MHGS…TGGQ and DYLK…PAKK. Residues 528–542 are compositionally biased toward polar residues; sequence KKSSTGSETTTPAKK.

The protein belongs to the phosphatase 2A regulatory subunit B56 family. Part of a complex consisting of a common heterodimeric core enzyme, composed of catalytic subunit let-92 and constant regulatory subunit paa-1, that associates with a variety of regulatory subunits which confer distinct properties to the holoenzyme. Interacts with akt-1 but not akt-2. Interacts with sgk-1. Interacts with P granule components meg-1, meg-3 and meg-4. Expressed in pharynx, vulva and spermatheca.

The protein resides in the cytoplasm. In terms of biological role, probable regulatory subunit of serine/threonine-protein phosphatase let-92 which negatively regulates the insulin receptor signaling cascade composed of daf-2, age-1, akt-1, akt-2 and sgk-1 by promoting the dephosphorylation of akt-1 on 'Thr-350'. Negatively regulates several functions controlled by the insulin pathway including dauer formation, lifespan, fat storage and stress resistance. Plays a role in the asymmetric segregation of the P granule components during embryonic cell divisions but does not play an essential role in specifying germ cell fate. Within a PP2A phosphatase complex, acts redundantly with pptr-2, to dephosphorylate P granule components including meg-1 and meg-3 to promote the assembly and accumulation of zygotic P granules in the posterior cytoplasm during zygote polarization, and thus maintain P granule distribution and segregation in early stage embryos following meiosis. In adults, required to promote germ cell proliferation and differentiation when exposed to thermic stress. The protein is Serine/threonine-protein phosphatase 2A regulatory subunit pptr-1 of Caenorhabditis elegans.